Reading from the N-terminus, the 525-residue chain is Light-independent protochlorophyllide reductase subunit B (525 aa).

A [4Fe-4S] cluster-binding site is contributed by Asp36. The active-site Proton donor is Asp286. 421–422 (GL) lines the substrate pocket.

It belongs to the ChlB/BchB/BchZ family. In terms of assembly, protochlorophyllide reductase is composed of three subunits; ChlL, ChlN and ChlB. Forms a heterotetramer of two ChlB and two ChlN subunits. [4Fe-4S] cluster serves as cofactor.

It catalyses the reaction chlorophyllide a + oxidized 2[4Fe-4S]-[ferredoxin] + 2 ADP + 2 phosphate = protochlorophyllide a + reduced 2[4Fe-4S]-[ferredoxin] + 2 ATP + 2 H2O. It participates in porphyrin-containing compound metabolism; chlorophyll biosynthesis (light-independent). Functionally, component of the dark-operative protochlorophyllide reductase (DPOR) that uses Mg-ATP and reduced ferredoxin to reduce ring D of protochlorophyllide (Pchlide) to form chlorophyllide a (Chlide). This reaction is light-independent. The NB-protein (ChlN-ChlB) is the catalytic component of the complex. This Prochlorococcus marinus (strain NATL1A) protein is Light-independent protochlorophyllide reductase subunit B.